We begin with the raw amino-acid sequence, 454 residues long: Adenosylmethionine-8-amino-7-oxononanoate aminotransferase (454 aa).

119-120 contacts pyridoxal 5'-phosphate; it reads GA. Position 152 (Y152) interacts with substrate. Pyridoxal 5'-phosphate is bound at residue D257. Substrate-binding residues include K286, G321, and R416. The residue at position 286 (K286) is an N6-(pyridoxal phosphate)lysine.

This sequence belongs to the class-III pyridoxal-phosphate-dependent aminotransferase family. BioA subfamily. In terms of assembly, homodimer. Pyridoxal 5'-phosphate is required as a cofactor.

It localises to the cytoplasm. It carries out the reaction (8S)-8-amino-7-oxononanoate + S-adenosyl-L-methionine = S-adenosyl-4-methylsulfanyl-2-oxobutanoate + (7R,8S)-7,8-diammoniononanoate. The protein operates within cofactor biosynthesis; biotin biosynthesis; 7,8-diaminononanoate from 8-amino-7-oxononanoate (SAM route): step 1/1. Its function is as follows. Catalyzes the transfer of the alpha-amino group from S-adenosyl-L-methionine (SAM) to 7-keto-8-aminopelargonic acid (KAPA) to form 7,8-diaminopelargonic acid (DAPA). It is the only aminotransferase known to utilize SAM as an amino donor. This is Adenosylmethionine-8-amino-7-oxononanoate aminotransferase from Anoxybacillus flavithermus (strain DSM 21510 / WK1).